The sequence spans 617 residues: Zinc finger protein 221 (617 aa).

The region spanning 30–100 (VTFKDVAVVF…KTTSQREGNS (71 aa)) is the KRAB domain. 3 C2H2-type zinc fingers span residues 170–192 (YRCN…QQSH), 198–220 (HTCG…QRVH), and 226–248 (YKCD…QRVH). A C2H2-type 4; degenerate zinc finger spans residues 254–276 (FKCGQCGKGFHSRSALNVHCKLH). 11 C2H2-type zinc fingers span residues 282 to 304 (YNCE…QRIH), 310 to 332 (FKCD…SMVH), 338 to 360 (FRCD…SMVH), 366 to 388 (YKCE…QMVH), 394 to 416 (YNCK…QQVH), 422 to 444 (FKCE…QRSH), 450 to 472 (YNCE…QRVH), 478 to 500 (YNCK…QRLH), 506 to 528 (FKCE…QTCH), 534 to 556 (YKCE…QRVH), and 562 to 584 (YNCK…QRLH).

The protein belongs to the krueppel C2H2-type zinc-finger protein family.

It is found in the nucleus. May be involved in transcriptional regulation. This chain is Zinc finger protein 221 (ZNF221), found in Homo sapiens (Human).